Consider the following 211-residue polypeptide: FMN-dependent NADH:quinone oxidoreductase 3 (211 aa).

M102–F105 lines the FMN pocket.

It belongs to the azoreductase type 1 family. In terms of assembly, homodimer. Requires FMN as cofactor.

The enzyme catalyses 2 a quinone + NADH + H(+) = 2 a 1,4-benzosemiquinone + NAD(+). It carries out the reaction N,N-dimethyl-1,4-phenylenediamine + anthranilate + 2 NAD(+) = 2-(4-dimethylaminophenyl)diazenylbenzoate + 2 NADH + 2 H(+). In terms of biological role, quinone reductase that provides resistance to thiol-specific stress caused by electrophilic quinones. Also exhibits azoreductase activity. Catalyzes the reductive cleavage of the azo bond in aromatic azo compounds to the corresponding amines. This is FMN-dependent NADH:quinone oxidoreductase 3 from Bacillus cereus (strain ZK / E33L).